The following is a 111-amino-acid chain: UPF0060 membrane protein Pden_1837 (111 aa).

4 helical membrane passes run 7–27, 30–50, 62–82, and 91–111; these read IAVY…FWAW, LGKS…FAWL, AYAA…WLTE, and ILGG…PRAA.

The protein belongs to the UPF0060 family.

It localises to the cell inner membrane. This Paracoccus denitrificans (strain Pd 1222) protein is UPF0060 membrane protein Pden_1837.